The following is a 417-amino-acid chain: Probable secreted aspartic protease ARB_07536 (417 aa).

The first 20 residues, 1–20 (MRGILILVALGAATIPQASA), serve as a signal peptide directing secretion. Positions 42–413 (NTDLVTIGTP…DFEKNRVGLA (372 aa)) constitute a Peptidase A1 domain. N-linked (GlcNAc...) asparagine glycosylation is found at asparagine 74, asparagine 91, asparagine 100, asparagine 170, asparagine 276, and asparagine 314. Cysteines 333 and 373 form a disulfide.

This sequence belongs to the peptidase A1 family.

It is found in the secreted. Its function is as follows. Probable secreted aspartic protease that supplies the fungus with nutrient amino acids. May be able to degrade the selected host's proteins involved in the immune defense. The sequence is that of Probable secreted aspartic protease ARB_07536 from Arthroderma benhamiae (strain ATCC MYA-4681 / CBS 112371) (Trichophyton mentagrophytes).